The following is a 562-amino-acid chain: Protein FAM83D-A (562 aa).

The tract at residues 424–471 is disordered; it reads ITTQTTETSQCTTQTPAPTSSVARLSNSSNSSSSSFSSTSITSTGSNC. The span at 425–471 shows a compositional bias: low complexity; that stretch reads TTQTTETSQCTTQTPAPTSSVARLSNSSNSSSSSFSSTSITSTGSNC.

This sequence belongs to the FAM83 family.

It localises to the cytoplasm. The protein localises to the cytoskeleton. It is found in the spindle. Its subcellular location is the spindle pole. Its function is as follows. May regulate cell proliferation, growth, migration and epithelial to mesenchymal transition. May also be important for proper chromosome congression and alignment during mitosis. The chain is Protein FAM83D-A from Xenopus laevis (African clawed frog).